We begin with the raw amino-acid sequence, 473 residues long: UDP-N-acetylmuramate--L-alanine ligase (473 aa).

112–118 (GTHGKTT) provides a ligand contact to ATP.

This sequence belongs to the MurCDEF family.

It localises to the cytoplasm. It carries out the reaction UDP-N-acetyl-alpha-D-muramate + L-alanine + ATP = UDP-N-acetyl-alpha-D-muramoyl-L-alanine + ADP + phosphate + H(+). It participates in cell wall biogenesis; peptidoglycan biosynthesis. Functionally, cell wall formation. In Nitrosomonas europaea (strain ATCC 19718 / CIP 103999 / KCTC 2705 / NBRC 14298), this protein is UDP-N-acetylmuramate--L-alanine ligase.